Reading from the N-terminus, the 395-residue chain is Na(+)/H(+) antiporter NhaA (395 aa).

11 helical membrane passes run 11-31 (FQLE…ALII), 61-81 (LLLW…GLEV), 96-116 (IVLP…IYWF), 127-147 (GWAI…ALLG), 156-176 (LFLM…IAIF), 179-199 (GELS…LVAM), 215-237 (LILW…TLAF), 262-282 (VAYG…LSGV), 295-315 (IAVG…WLAV), 334-354 (VAIL…LAFV), and 366-386 (MGIL…TAAA).

This sequence belongs to the NhaA Na(+)/H(+) (TC 2.A.33) antiporter family.

Its subcellular location is the cell inner membrane. It catalyses the reaction Na(+)(in) + 2 H(+)(out) = Na(+)(out) + 2 H(+)(in). Na(+)/H(+) antiporter that extrudes sodium in exchange for external protons. This Pseudomonas fluorescens (strain Pf0-1) protein is Na(+)/H(+) antiporter NhaA.